Consider the following 987-residue polypeptide: Pro-apoptotic serine protease NMA111 (987 aa).

A disordered region spans residues 1-29 (MPDIPTKRRLSNGSVIDNTNKRQMQSSFV). The span at 11–28 (SNGSVIDNTNKRQMQSSF) shows a compositional bias: polar residues. Residues 69–262 (VKSVVSIQFT…LPVYRPLRAL (194 aa)) are serine protease. Catalysis depends on charge relay system residues histidine 110, aspartate 141, and serine 224. 2 consecutive PDZ domains span residues 279 to 364 (EWSL…VVIQ) and 878 to 950 (PHHG…VSFD).

The protein belongs to the peptidase S1C family.

The protein localises to the nucleus. Nuclear serine protease which mediates apoptosis. This Debaryomyces hansenii (strain ATCC 36239 / CBS 767 / BCRC 21394 / JCM 1990 / NBRC 0083 / IGC 2968) (Yeast) protein is Pro-apoptotic serine protease NMA111 (NMA111).